The sequence spans 111 residues: Large ribosomal subunit protein P1 (111 aa).

Residues 75–111 (AAAPAAEEKAEEEKKEEEEEKKEEEVDLSGLSGMFGF) are disordered. Positions 88-101 (KKEEEEEKKEEEVD) are enriched in acidic residues.

The protein belongs to the eukaryotic ribosomal protein P1/P2 family. As to quaternary structure, part of the 50S ribosomal subunit. Homodimer, it forms part of the ribosomal stalk which helps the ribosome interact with GTP-bound translation factors. Forms a heptameric uL10/P0(P1)2(P1)2(P1)2 complex, where uL10/P0 forms an elongated spine to which the P1 dimers bind in a sequential fashion.

Its function is as follows. Forms part of the ribosomal stalk, playing a central role in the interaction of the ribosome with GTP-bound translation factors. This Aeropyrum pernix (strain ATCC 700893 / DSM 11879 / JCM 9820 / NBRC 100138 / K1) protein is Large ribosomal subunit protein P1.